A 214-amino-acid chain; its full sequence is Protein-L-isoaspartate O-methyltransferase (214 aa).

The active site involves serine 61.

This sequence belongs to the methyltransferase superfamily. L-isoaspartyl/D-aspartyl protein methyltransferase family.

The protein localises to the cytoplasm. It catalyses the reaction [protein]-L-isoaspartate + S-adenosyl-L-methionine = [protein]-L-isoaspartate alpha-methyl ester + S-adenosyl-L-homocysteine. Catalyzes the methyl esterification of L-isoaspartyl residues in peptides and proteins that result from spontaneous decomposition of normal L-aspartyl and L-asparaginyl residues. It plays a role in the repair and/or degradation of damaged proteins. The polypeptide is Protein-L-isoaspartate O-methyltransferase (Paramagnetospirillum magneticum (strain ATCC 700264 / AMB-1) (Magnetospirillum magneticum)).